A 363-amino-acid chain; its full sequence is Type-2 angiotensin II receptor (363 aa).

Residues 1–45 (MKGNSTLATTSKNITSGLHFGLVNISGNNESTLNCSQKPSDKHLD) lie on the Extracellular side of the membrane. N-linked (GlcNAc...) asparagine glycosylation is found at N4, N13, N24, N29, and N34. Intrachain disulfides connect C35–C290 and C117–C195. Residues 46–70 (AIPILYYIIFVIGFLVNIVVVTLFC) traverse the membrane as a helical segment. Topologically, residues 71–80 (CQKGPKKVSS) are cytoplasmic. The chain crosses the membrane as a helical span at residues 81-104 (IYIFNLAVADLLLLATLPLWATYY). The angiotensin II site is built by Y103 and Y104. At 105–114 (SYRYDWLFGP) the chain is on the extracellular side. Residues 115–140 (VMCKVFGSFLTLNMFASIFFITCMSV) form a helical membrane-spanning segment. Residues 141 to 159 (DRYQSVIYPFLSQRRNPWQ) are Cytoplasmic-facing. The chain crosses the membrane as a helical span at residues 160-181 (ASYIVPLVWCMACLSSLPTFYF). Angiotensin II-binding residues include R182, Y204, and K215. Topologically, residues 182-206 (RDVRTIEYLGVNACIMAFPPEKYAQ) are extracellular. The chain crosses the membrane as a helical span at residues 207-232 (WSAGIALMKNILGFIIPLIFIATCYF). The Cytoplasmic segment spans residues 233 to 257 (GIRKHLLKTNSYGKNRITRDQVLKM). Residues 258 to 281 (AAAVVLAFIICWLPFHVLTFLDAL) form a helical membrane-spanning segment. D279 serves as a coordination point for angiotensin II. At 282–294 (AWMGVINSCEVIA) the chain is on the extracellular side. The chain crosses the membrane as a helical span at residues 295 to 320 (VIDLALPFAILLGFTNSCVNPFLYCF). Angiotensin II is bound at residue D297. The Cytoplasmic segment spans residues 321–363 (VGNRFQQKLRSVFRVPITWLQGKRESMSCRKSSSLREMETFVS). The interval 324–333 (RFQQKLRSVF) is helix VIII.

The protein belongs to the G-protein coupled receptor 1 family. In terms of assembly, interacts with MTUS1. In adult, highly expressed in myometrium with lower levels in adrenal gland and fallopian tube. Expressed in the cerebellum. Very highly expressed in fetal kidney and intestine.

Its subcellular location is the cell membrane. Its function is as follows. Receptor for angiotensin II, a vasoconstricting peptide. Signals primarily via a non-canonical G-protein- and beta-arrestin independent pathways. Cooperates with MTUS1 to inhibit ERK2 activation and cell proliferation. In Homo sapiens (Human), this protein is Type-2 angiotensin II receptor.